The following is a 663-amino-acid chain: Methionine--tRNA ligase (663 aa).

The 'HIGH' region signature appears at 10–20; that stretch reads AYTNGPLHLGH. Zn(2+) is bound by residues Cys142, Cys145, Cys154, and Cys157. Residues 323-327 carry the 'KMSKS' region motif; it reads KMSTS. Thr326 provides a ligand contact to ATP. A tRNA-binding domain is found at 563 to 663; that stretch reads YFGNVDLRVG…RDLPVGSKIH (101 aa).

This sequence belongs to the class-I aminoacyl-tRNA synthetase family. MetG type 1 subfamily. In terms of assembly, homodimer. The cofactor is Zn(2+).

The protein localises to the cytoplasm. The enzyme catalyses tRNA(Met) + L-methionine + ATP = L-methionyl-tRNA(Met) + AMP + diphosphate. In terms of biological role, is required not only for elongation of protein synthesis but also for the initiation of all mRNA translation through initiator tRNA(fMet) aminoacylation. This is Methionine--tRNA ligase from Methanococcus maripaludis (strain C7 / ATCC BAA-1331).